The primary structure comprises 561 residues: MAKIKFFALGGQDERGKNCYVLEIDNDVFIFNVGSLTPTTAVLGVKKIIPDFSWIQENQARVKGIFIGNAITENLGSLEFLFHTVGFFPIYTSSIGASIIKSKINENKLNIARDKLEIHELKPLETIEISNHSITPFKVSSSLPSSFGFALNTDNGYIVFIDDFIVLNDKNIAFENQLNQIIPKLSDNTLLLITGVGLVGRNSGFTTPKHKSLEQLNRIITPAKGRIFVACYDSNAYSVMTLAQIARMQNRPFIIYSQSFVHLFNTIVRQKLFNNTHLNTISIEEINNSTNSIVVLTSPPDKLYAKLFKIGMNEDERIRYRKSDTFIFMTPKVAGYEEIEAQILDDIARNEVSYYNLGREILSIQASDEDMKFLVSSLKPKYIIPTGGLYRDFINFTMVLKQAGAEQNQILILFNGEVLTIENKKLDSKKNELKLNPKCVDSAGLQEIGASIMFERDQMSESGVVIIIIYFDQKKSEFLNEITYSFLGVSLDVPEKDKLKTKMEELIKKQINDIKDFTTIKKRIGKEISKELKVSIKRAVMNLFTKMTSKAPLILSTIISI.

A run of 2 helical transmembrane segments spans residues 29–49 and 80–100; these read FIFN…KKII and FLFH…ASII.

The protein localises to the cell membrane. This is an uncharacterized protein from Mycoplasma genitalium (strain ATCC 33530 / DSM 19775 / NCTC 10195 / G37) (Mycoplasmoides genitalium).